The primary structure comprises 954 residues: Glucosidase 2 subunit alpha (954 aa).

A signal peptide spans 1 to 22 (MVLLKWLVCQLVFFTAFSHAFT). 5 N-linked (GlcNAc...) asparagine glycosylation sites follow: asparagine 114, asparagine 126, asparagine 142, asparagine 173, and asparagine 345. Residue aspartate 537 is the Nucleophile of the active site. Residue glutamate 540 is part of the active site. Aspartate 614 serves as the catalytic Proton donor. N-linked (GlcNAc...) asparagine glycosylation is found at asparagine 783, asparagine 791, asparagine 867, asparagine 880, asparagine 907, and asparagine 941.

This sequence belongs to the glycosyl hydrolase 31 family. As to quaternary structure, heterodimer of a catalytic subunit alpha (ROT2) and a subunit beta (GTB1).

The protein resides in the endoplasmic reticulum. The enzyme catalyses N(4)-(alpha-D-Glc-(1-&gt;3)-alpha-D-Man-(1-&gt;2)-alpha-D-Man-(1-&gt;2)-alpha-D-Man-(1-&gt;3)-[alpha-D-Man-(1-&gt;2)-alpha-D-Man-(1-&gt;3)-[alpha-D-Man-(1-&gt;2)-alpha-D-Man-(1-&gt;6)]-alpha-D-Man-(1-&gt;6)]-beta-D-Man-(1-&gt;4)-beta-D-GlcNAc-(1-&gt;4)-beta-D-GlcNAc)-L-asparaginyl-[protein] + H2O = N(4)-(alpha-D-Man-(1-&gt;2)-alpha-D-Man-(1-&gt;2)-alpha-D-Man-(1-&gt;3)-[alpha-D-Man-(1-&gt;2)-alpha-D-Man-(1-&gt;3)-[alpha-D-Man-(1-&gt;2)-alpha-D-Man-(1-&gt;6)]-alpha-D-Man-(1-&gt;6)]-beta-D-Man-(1-&gt;4)-beta-D-GlcNAc-(1-&gt;4)-beta-D-GlcNAc)-L-asparaginyl-[protein] (N-glucan mannose isomer 9A1,2,3B1,2,3) + beta-D-glucose. It carries out the reaction N(4)-(alpha-D-Glc-(1-&gt;3)-alpha-D-Glc-(1-&gt;3)-alpha-D-Man-(1-&gt;2)-alpha-D-Man-(1-&gt;2)-alpha-D-Man-(1-&gt;3)-[alpha-D-Man-(1-&gt;2)-alpha-D-Man-(1-&gt;3)-[alpha-D-Man-(1-&gt;2)-alpha-D-Man-(1-&gt;6)]-alpha-D-Man-(1-&gt;6)]-beta-D-Man-(1-&gt;4)-beta-D-GlcNAc-(1-&gt;4)-beta-D-GlcNAc)-L-asparaginyl-[protein] + H2O = N(4)-(alpha-D-Glc-(1-&gt;3)-alpha-D-Man-(1-&gt;2)-alpha-D-Man-(1-&gt;2)-alpha-D-Man-(1-&gt;3)-[alpha-D-Man-(1-&gt;2)-alpha-D-Man-(1-&gt;3)-[alpha-D-Man-(1-&gt;2)-alpha-D-Man-(1-&gt;6)]-alpha-D-Man-(1-&gt;6)]-beta-D-Man-(1-&gt;4)-beta-D-GlcNAc-(1-&gt;4)-beta-D-GlcNAc)-L-asparaginyl-[protein] + beta-D-glucose. It functions in the pathway glycan metabolism; N-glycan metabolism. With respect to regulation, inhibited by glucose, maltose and nigerose, and by the antibiotic deoxynojirimycin. Its function is as follows. Catalytic subunit of glucosidase 2, which cleaves sequentially the 2 innermost alpha-1,3-linked glucose residues from the Glc(2)Man(9)GlcNAc(2) oligosaccharide precursor of immature glycoproteins. This Saccharomyces cerevisiae (strain ATCC 204508 / S288c) (Baker's yeast) protein is Glucosidase 2 subunit alpha (ROT2).